The chain runs to 75 residues: Probable pilin MJ1469 (75 aa).

Residues 1-11 (MKPKKIISNKA) constitute a propeptide that is removed on maturation. The QXSXEXXXL signature appears at 12-20 (QISLELALL).

The N-terminus is cleaved by the prepilin peptidase EppA, which recognizes the class III signal sequence.

The protein localises to the secreted. Its subcellular location is the cell surface. The protein resides in the fimbrium. This chain is Probable pilin MJ1469, found in Methanocaldococcus jannaschii (strain ATCC 43067 / DSM 2661 / JAL-1 / JCM 10045 / NBRC 100440) (Methanococcus jannaschii).